Reading from the N-terminus, the 253-residue chain is MARSLLLPLQILLLSLALETAGEEAQGDKIIDGAPCARGSHPWQVALLSGNQLHCGGVLVNERWVLTAAHCKMNEYTVHLGSDTLGDRRAQRIKASKSFRHPGYSTQTHVNDLMLVKLNSQARLSSMVKKVRLPSRCEPPGTTCTVSGWGTTTSPDVTFPSDLMCVDVKLISPQDCTKVYKDLLENSMLCAGIPDSKKNACNGDSGGPLVCRGTLQGLVSWGTFPCGQPNDPGVYTQVCKFTKWINDTMKKHR.

The first 22 residues, 1 to 22 (MARSLLLPLQILLLSLALETAG), serve as a signal peptide directing secretion. A propeptide spans 23 to 29 (EEAQGDK) (activation peptide). In terms of domain architecture, Peptidase S1 spans 30–250 (IIDGAPCARG…FTKWINDTMK (221 aa)). 6 disulfide bridges follow: Cys36–Cys165, Cys55–Cys71, Cys137–Cys239, Cys144–Cys211, Cys176–Cys190, and Cys201–Cys226. Catalysis depends on charge relay system residues His70 and Asp112. The active-site Charge relay system is the Ser205. Residue Asn246 is glycosylated (N-linked (GlcNAc...) asparagine).

This sequence belongs to the peptidase S1 family. Kallikrein subfamily. As to expression, abundantly expressed in the skin and is expressed by keratinocytes in the epidermis. Also expressed in the brain, mammary gland, cerebellum, spinal cord and kidney. Lower levels in salivary glands, uterus, thymus, thyroid, placenta, trachea and testis. Up-regulated in ovarian carcinoma, especially late-stage serous carcinoma, compared with normal ovaries and benign adenomas (at protein level).

It is found in the secreted. It carries out the reaction Cleavage of proteins with aromatic side chains in the P1 position.. Inhibited by Zn2+ and Cu2+ at low micromolar concentrations. Inhibited by SERPINA12. Its function is as follows. May catalyze the degradation of intercellular cohesive structures in the cornified layer of the skin in the continuous shedding of cells from the skin surface. Specific for amino acid residues with aromatic side chains in the P1 position. Cleaves insulin A chain at '14-Tyr-|-Gln-15' and insulin B chain at '6-Leu-|-Cys-7', '16-Tyr-|-Leu-17', '25-Phe-|-Tyr-26' and '26-Tyr-|-Thr-27'. Could play a role in the activation of precursors to inflammatory cytokines. The sequence is that of Kallikrein-7 (KLK7) from Homo sapiens (Human).